The following is an 833-amino-acid chain: MASVFRSEEMCLSQVFLQVEAAYCCVAELGELGLVQFKDLNANVNSFQRKFVNEVRRCESLERILRFLEDEMQNEILIQVPEKDAETPLPREMITLETTLEKLEGELQEANQSHQALKKSFLELTELKYLLKKTQDFFETETNLGEDFFVEDTSGLLELRTIPAFMTGKLGFTAGVINRERMASFERLLWRVCRGNVYLKFSEMDTLLEDPVTKEEIKKNIFIIFYQGEQLRLKIKKICDGFRATIYPCPEHAAERREMLTSVNVRLEDLITVITQTESHRQRLLQEAAANWHSWVIKVQKMKAVYHVLNMCNIDVTQQCIIAEIWFPVADTRHIKKALEQGMELSGSSMIPIMTEVETKTDPPTFNRTNKFTAGFQNIVDAYGVGSYREINPAPYTIITFPFLFAVMFGDCGHGMVMLMAALWMVLNERHLLAQKSTNEMWNIFFNGRYLILLMGIFSIYTGLIYNDCFSKSFNIFGSSWSVQPMFRNGTWNTHIVENSPYLQLDPAIPGVYSGNPYPFGIDPIWNLASNKLTFLNSYKMKMSVILGIAHMIFGVILSLFNHIYFRRTLNIILQFIPEMIFMLSLFGYLVFMIIFKWCRYDAHTSRKAPSILIHFIGMFLFDYDDSSNAPLYGHQQEVQTFFVIIALVSVPWMLLIKPFVLRAKHQKSQLQSFTIHEDAVEGDHSGHSSKKTAGAHGMKDGHEEEFNFGDIFVHQAIHTIEYCLGCISNTASYLRLWALSLAHAELSEVLWTMVMSIGLRLQGWAGLVGVFIIFAVFAVLTVAILLVMEGLSAFLHALRLHWVEFQNKFYEGAGSKFSPFSFKHVLEGTAEE.

At 1–390 (MASVFRSEEM…DAYGVGSYRE (390 aa)) the chain is on the cytoplasmic side. A helical membrane pass occupies residues 391-409 (INPAPYTIITFPFLFAVMF). The Vacuolar segment spans residues 410–411 (GD). A helical membrane pass occupies residues 412 to 428 (CGHGMVMLMAALWMVLN). Residues 429–443 (ERHLLAQKSTNEMWN) lie on the Cytoplasmic side of the membrane. The helical transmembrane segment at 444-473 (IFFNGRYLILLMGIFSIYTGLIYNDCFSKS) threads the bilayer. Residues 474–538 (FNIFGSSWSV…ASNKLTFLNS (65 aa)) lie on the Vacuolar side of the membrane. A helical membrane pass occupies residues 539–558 (YKMKMSVILGIAHMIFGVIL). Over 559–576 (SLFNHIYFRRTLNIILQF) the chain is Cytoplasmic. A helical membrane pass occupies residues 577 to 597 (IPEMIFMLSLFGYLVFMIIFK). The Vacuolar portion of the chain corresponds to 598–642 (WCRYDAHTSRKAPSILIHFIGMFLFDYDDSSNAPLYGHQQEVQTF). The chain crosses the membrane as a helical span at residues 643–662 (FVIIALVSVPWMLLIKPFVL). Topologically, residues 663-720 (RAKHQKSQLQSFTIHEDAVEGDHSGHSSKKTAGAHGMKDGHEEEFNFGDIFVHQAIHT) are cytoplasmic. Residues 681-700 (VEGDHSGHSSKKTAGAHGMK) are disordered. Residues 721–745 (IEYCLGCISNTASYLRLWALSLAHA) form a helical membrane-spanning segment. The Vacuolar portion of the chain corresponds to 746–766 (ELSEVLWTMVMSIGLRLQGWA). A helical membrane pass occupies residues 767 to 805 (GLVGVFIIFAVFAVLTVAILLVMEGLSAFLHALRLHWVE). At 806 to 833 (FQNKFYEGAGSKFSPFSFKHVLEGTAEE) the chain is on the cytoplasmic side.

It belongs to the V-ATPase 116 kDa subunit family. In terms of assembly, V-ATPase is a heteromultimeric enzyme made up of two complexes: the ATP-hydrolytic V1 complex and the proton translocation V0 complex. The V1 complex consists of three catalytic AB heterodimers that form a heterohexamer, three peripheral stalks each consisting of EG heterodimers, one central rotor including subunits D and F, and the regulatory subunits C and H. The proton translocation complex V0 consists of the proton transport subunit a, a ring of proteolipid subunits c9c'', rotary subunit d, subunits e and f, and the accessory subunits ATP6AP1/Ac45 and ATP6AP2/PRR. Interacts with the V1 complex V-ATPase subunit A ATP6V1A. Interacts with the V0 complex V-ATPase subunit c ATP6V0C. Specifically expressed in kidney, but not in the heart, brain, spleen, lung, liver, muscle, or testis. Distribution within the kidney appears more widespread than that seen in man. High intensity staining at the surface of intercalated cells, with additional expression in the proximal tubule.

It localises to the apical cell membrane. The protein localises to the basolateral cell membrane. In terms of biological role, subunit of the V0 complex of vacuolar(H+)-ATPase (V-ATPase), a multisubunit enzyme composed of a peripheral complex (V1) that hydrolyzes ATP and a membrane integral complex (V0) that translocates protons. V-ATPase is responsible for acidifying and maintaining the pH of intracellular compartments and in some cell types, is targeted to the plasma membrane, where it is responsible for acidifying the extracellular environment. Involved in normal vectorial acid transport into the urine by the kidney. The sequence is that of V-type proton ATPase 116 kDa subunit a 4 (Atp6v0a4) from Mus musculus (Mouse).